A 927-amino-acid chain; its full sequence is Ribosome-releasing factor 2, mitochondrial (927 aa).

A mitochondrion-targeting transit peptide spans 1 to 57 (MVTAPLLGWVAVRPIPRLSKLNTCKYVSSSLQSYKRSVGSCLGKQQSRDFSYSATLT). The tr-type G domain occupies 64 to 379 (EKTRNIGIIA…AVNNLLPGPS (316 aa)). GTP is bound by residues 73–80 (AHIDAGKT), 163–167 (DTPGH), and 217–220 (NKLD).

This sequence belongs to the TRAFAC class translation factor GTPase superfamily. Classic translation factor GTPase family. EF-G/EF-2 subfamily.

Its subcellular location is the mitochondrion. Mitochondrial GTPase that mediates the disassembly of ribosomes from messenger RNA at the termination of mitochondrial protein biosynthesis. Not involved in the GTP-dependent ribosomal translocation step during translation elongation. The protein is Ribosome-releasing factor 2, mitochondrial (mef2) of Talaromyces marneffei (strain ATCC 18224 / CBS 334.59 / QM 7333) (Penicillium marneffei).